A 447-amino-acid chain; its full sequence is Diaminopimelate decarboxylase (447 aa).

At K72 the chain carries N6-(pyridoxal phosphate)lysine. Pyridoxal 5'-phosphate is bound by residues G258 and 300 to 303 (EPGR). Positions 303, 344, and 348 each coordinate substrate. C375 serves as the catalytic Proton donor. E376 and Y405 together coordinate substrate. Y405 provides a ligand contact to pyridoxal 5'-phosphate.

The protein belongs to the Orn/Lys/Arg decarboxylase class-II family. LysA subfamily. Homodimer. Pyridoxal 5'-phosphate serves as cofactor.

The enzyme catalyses meso-2,6-diaminopimelate + H(+) = L-lysine + CO2. The protein operates within amino-acid biosynthesis; L-lysine biosynthesis via DAP pathway; L-lysine from DL-2,6-diaminopimelate: step 1/1. Its function is as follows. Specifically catalyzes the decarboxylation of meso-diaminopimelate (meso-DAP) to L-lysine. The sequence is that of Diaminopimelate decarboxylase from Mycobacterium bovis (strain ATCC BAA-935 / AF2122/97).